Reading from the N-terminus, the 93-residue chain is Co-chaperonin GroES (93 aa).

It belongs to the GroES chaperonin family. Heptamer of 7 subunits arranged in a ring. Interacts with the chaperonin GroEL.

It localises to the cytoplasm. Functionally, together with the chaperonin GroEL, plays an essential role in assisting protein folding. The GroEL-GroES system forms a nano-cage that allows encapsulation of the non-native substrate proteins and provides a physical environment optimized to promote and accelerate protein folding. GroES binds to the apical surface of the GroEL ring, thereby capping the opening of the GroEL channel. In Lacticaseibacillus paracasei (strain ATCC 334 / BCRC 17002 / CCUG 31169 / CIP 107868 / KCTC 3260 / NRRL B-441) (Lactobacillus paracasei), this protein is Co-chaperonin GroES.